Here is a 142-residue protein sequence, read N- to C-terminus: MPRGSRSAASRPASRPAAPSAHPPAHPPPSAAAPAPAPSGQPGLMAQMATTAAGVAVGSAVGHVMGSALTGAFSGGSSEPSQPAVQQAPTPAAPQPLQMGPCAYEIRQFLDCSTTQSDLSLCEGFSEALKQCKYYHGLSSLP.

The transit peptide at 1-16 directs the protein to the mitochondrion; the sequence is MPRGSRSAASRPASRP. A compositionally biased stretch (low complexity) spans 1-20; the sequence is MPRGSRSAASRPASRPAAPS. Disordered regions lie at residues 1 to 45 and 68 to 97; these read MPRG…PGLM and ALTGAFSGGSSEPSQPAVQQAPTPAAPQPL. A compositionally biased stretch (pro residues) spans 21-39; it reads AHPPAHPPPSAAAPAPAPS. The segment covering 80-90 has biased composition (low complexity); it reads PSQPAVQQAPT. The CHCH domain occupies 99-140; the sequence is MGPCAYEIRQFLDCSTTQSDLSLCEGFSEALKQCKYYHGLSS. 2 short sequence motifs (cx9C motif) span residues 102–112 and 122–132; these read CAYEIRQFLDC and CEGFSEALKQC. 2 cysteine pairs are disulfide-bonded: Cys102–Cys132 and Cys112–Cys122.

In terms of tissue distribution, ubiquitously expressed. Higher expression is observed in heart and liver.

It localises to the mitochondrion intermembrane space. In terms of biological role, may be involved in the maintenance of mitochondrial organization and mitochondrial cristae structure. The polypeptide is Coiled-coil-helix-coiled-coil-helix domain-containing protein 10, mitochondrial (CHCHD10) (Homo sapiens (Human)).